Consider the following 55-residue polypeptide: Mannose/glucose-specific lectin alpha chain (55 aa).

This sequence belongs to the leguminous lectin family. Tetramer of two alpha and two beta chains.

In Lathyrus sativus (White vetchling), this protein is Mannose/glucose-specific lectin alpha chain.